The following is a 293-amino-acid chain: Undecaprenyl-diphosphatase (293 aa).

Transmembrane regions (helical) follow at residues 107 to 127, 134 to 154, 207 to 227, 243 to 263, and 268 to 288; these read WMII…KDLI, MWIT…AEKV, FSFL…LPDA, IGTL…MKFV, and FSWF…LLWL.

The protein belongs to the UppP family.

The protein localises to the cell membrane. The catalysed reaction is di-trans,octa-cis-undecaprenyl diphosphate + H2O = di-trans,octa-cis-undecaprenyl phosphate + phosphate + H(+). In terms of biological role, catalyzes the dephosphorylation of undecaprenyl diphosphate (UPP). Confers resistance to bacitracin. The sequence is that of Undecaprenyl-diphosphatase from Corynebacterium efficiens (strain DSM 44549 / YS-314 / AJ 12310 / JCM 11189 / NBRC 100395).